The primary structure comprises 128 residues: Large ribosomal subunit protein bL20 (128 aa).

The protein belongs to the bacterial ribosomal protein bL20 family.

Its function is as follows. Binds directly to 23S ribosomal RNA and is necessary for the in vitro assembly process of the 50S ribosomal subunit. It is not involved in the protein synthesizing functions of that subunit. In Corynebacterium efficiens (strain DSM 44549 / YS-314 / AJ 12310 / JCM 11189 / NBRC 100395), this protein is Large ribosomal subunit protein bL20.